A 714-amino-acid polypeptide reads, in one-letter code: Fatty acid oxidation complex subunit alpha (714 aa).

An enoyl-CoA hydratase region spans residues 1–190; sequence MEMASAFTLN…KLGLVDDVVP (190 aa). Positions 306–714 are 3-hydroxyacyl-CoA dehydrogenase; it reads APLNSVGILG…FWKTTATDLQ (409 aa).

It in the N-terminal section; belongs to the enoyl-CoA hydratase/isomerase family. The protein in the central section; belongs to the 3-hydroxyacyl-CoA dehydrogenase family. In terms of assembly, heterotetramer of two alpha chains (FadJ) and two beta chains (FadI).

The protein localises to the cytoplasm. It carries out the reaction a (3S)-3-hydroxyacyl-CoA = a (2E)-enoyl-CoA + H2O. It catalyses the reaction a 4-saturated-(3S)-3-hydroxyacyl-CoA = a (3E)-enoyl-CoA + H2O. The catalysed reaction is a (3S)-3-hydroxyacyl-CoA + NAD(+) = a 3-oxoacyl-CoA + NADH + H(+). The enzyme catalyses (3S)-3-hydroxybutanoyl-CoA = (3R)-3-hydroxybutanoyl-CoA. It participates in lipid metabolism; fatty acid beta-oxidation. Its function is as follows. Catalyzes the formation of a hydroxyacyl-CoA by addition of water on enoyl-CoA. Also exhibits 3-hydroxyacyl-CoA epimerase and 3-hydroxyacyl-CoA dehydrogenase activities. The polypeptide is Fatty acid oxidation complex subunit alpha (Escherichia coli O7:K1 (strain IAI39 / ExPEC)).